We begin with the raw amino-acid sequence, 550 residues long: Arginine--tRNA ligase (550 aa).

The 'HIGH' region signature appears at A130–G140.

The protein belongs to the class-I aminoacyl-tRNA synthetase family. In terms of assembly, monomer.

Its subcellular location is the cytoplasm. It catalyses the reaction tRNA(Arg) + L-arginine + ATP = L-arginyl-tRNA(Arg) + AMP + diphosphate. The sequence is that of Arginine--tRNA ligase from Mycobacterium marinum (strain ATCC BAA-535 / M).